Reading from the N-terminus, the 1549-residue chain is ATP-binding cassette sub-family C member 9 (1549 aa).

Topologically, residues 1–30 (MSLSFCGNNISSYNINDGVLQNSCFVDALN) are extracellular. Asparagine 9 carries an N-linked (GlcNAc...) asparagine glycan. The helical transmembrane segment at 31-51 (LVPHVFLLFITFPILFIGWGS) threads the bilayer. At 52 to 72 (QSSKVQIHHNTWLHFPGHNLR) the chain is on the cytoplasmic side. Residues 73–93 (WILTFALLFVHVCEIAEGIVS) traverse the membrane as a helical segment. At 94-101 (DSRRESRH) the chain is on the extracellular side. Residues 102–122 (LHLFMPAVMGFVATTTSIVYY) traverse the membrane as a helical segment. Residues 123–132 (HNIETSNFPK) are Cytoplasmic-facing. Residues 133-153 (LLLALFLYWVMAFITKTIKLV) form a helical membrane-spanning segment. At 154–167 (KYCQSGLDISNLRF) the chain is on the extracellular side. Residues 168–188 (CITGMMVILNGLLMAVEINVI) form a helical membrane-spanning segment. Over 189 to 301 (RVRRYVFFMN…AFGRPILLSS (113 aa)) the chain is Cytoplasmic. Residues 297–597 (ILLSSTFRYL…LSTVVRFAVK (301 aa)) form the ABC transmembrane type-1 1 domain. Residues 302 to 322 (TFRYLADLLGFAGPLCISGIV) traverse the membrane as a helical segment. The Extracellular segment spans residues 323–350 (QRVNETQNGTNNTTGISETLSSKEFLEN). N-linked (GlcNAc...) asparagine glycosylation is found at asparagine 326, asparagine 330, asparagine 333, and asparagine 334. A helical transmembrane segment spans residues 351–371 (AYVLAVLLFLALILQRTFLQA). Residues 372–423 (SYYVTIETGINLRGALLAMIYNKILRLSTSNLSMGEMTLGQINNLVAIETNQ) lie on the Cytoplasmic side of the membrane. Residues 424 to 444 (LMWFLFLCPNLWAMPVQIIMG) form a helical membrane-spanning segment. The Extracellular segment spans residues 445 to 455 (VILLYNLLGSS). Residues 456–476 (ALVGAAVIVLLAPIQYFIATK) traverse the membrane as a helical segment. Over 477-531 (LAEAQKSTLDYSTERLKKTNEILKGIKLLKLYAWEHIFCKSVEETRMKELSSLKT) the chain is Cytoplasmic. The chain crosses the membrane as a helical span at residues 532 to 552 (FALYTSLSIFMNAAIPIAAVL). At 553 to 571 (ATFVTHAYASGNNLKPAEA) the chain is on the extracellular side. Residues 572-592 (FASLSLFHILVTPLFLLSTVV) form a helical membrane-spanning segment. Residues 593–990 (RFAVKAIISV…TCWRYLTSGG (398 aa)) are Cytoplasmic-facing. Residues 672 to 912 (IKVTNGYFSW…DVELYEHWKT (241 aa)) enclose the ABC transporter 1 domain. Position 705–712 (705–712 (GQVGCGKS)) interacts with ATP. The disordered stretch occupies residues 944–967 (REAKAQMEDEDEEEEEEEDEDDNM). A compositionally biased stretch (acidic residues) spans 951-966 (EDEDEEEEEEEDEDDN). The helical transmembrane segment at 991-1011 (FFLLILMIFSKLLKHSVIVAI) threads the bilayer. The 281-residue stretch at 994 to 1274 (LILMIFSKLL…VVRNLADLEV (281 aa)) folds into the ABC transmembrane type-1 2 domain. Topologically, residues 1012-1034 (DYWLATWTSEYSINNTGKADQTY) are extracellular. Residues 1035–1055 (YVAGFSILCGAGIFLCLVTSL) traverse the membrane as a helical segment. Residues 1056-1127 (TVEWMGLTAA…TLLCLSAIGM (72 aa)) are Cytoplasmic-facing. The helical transmembrane segment at 1128–1148 (ISYATPVFLVALLPLGVAFYF) threads the bilayer. Residues 1149-1245 (IQKYFRVASK…IASISGSSNS (97 aa)) lie on the Extracellular side of the membrane. A helical membrane pass occupies residues 1246 to 1266 (GLVGLGLLYALTITNYLNWVV). Over 1267-1549 (RNLADLEVQM…LFSTLVMTNK (283 aa)) the chain is Cytoplasmic. An ABC transporter 2 domain is found at 1312 to 1546 (IKIHDLCVRY…KNGLFSTLVM (235 aa)). ATP is bound at residue 1346–1353 (GRTGSGKS).

The protein belongs to the ABC transporter superfamily. ABCC family. Conjugate transporter (TC 3.A.1.208) subfamily. As to quaternary structure, interacts with KCNJ11. Interacts with KCNJ8.

The protein localises to the membrane. Subunit of ATP-sensitive potassium channels (KATP). Can form cardiac and smooth muscle-type KATP channels with KCNJ11. KCNJ11 forms the channel pore while ABCC9 is required for activation and regulation. Can form a sulfonylurea-sensitive but ATP-insensitive potassium channel with KCNJ8. The protein is ATP-binding cassette sub-family C member 9 (ABCC9) of Homo sapiens (Human).